The following is an 89-amino-acid chain: DNA/RNA-binding protein Alba (89 aa).

Belongs to the histone-like Alba family.

It localises to the cytoplasm. The protein resides in the chromosome. Binds double-stranded DNA tightly but without sequence specificity. Involved in DNA compaction. The sequence is that of DNA/RNA-binding protein Alba from Methanothrix thermoacetophila (strain DSM 6194 / JCM 14653 / NBRC 101360 / PT) (Methanosaeta thermophila).